The primary structure comprises 147 residues: UPF0460 protein in nifX-nifW intergenic region (147 aa).

It belongs to the UPF0460 family.

This Frankia alni protein is UPF0460 protein in nifX-nifW intergenic region.